The following is a 481-amino-acid chain: DNA primase DnaG (481 aa).

Residues 169–243 form the Toprim domain; sequence DAILVVEGRA…DVDYVARAPD (75 aa). Mg(2+) is bound by residues glutamate 175, aspartate 217, and aspartate 219. Residues 275 to 393 are disordered; it reads RRRNKLAAQA…ARKEREPSEF (119 aa). Residues 281–309 are compositionally biased toward low complexity; it reads AAQAAEKQAQAEAAQKAEAPAAAAPVQPQ. A compositionally biased stretch (basic and acidic residues) spans 312-393; sequence YQQKEYPQRE…ARKEREPSEF (82 aa).

This sequence belongs to the archaeal DnaG primase family. Forms a ternary complex with MCM helicase and DNA. Component of the archaeal exosome complex. Mg(2+) is required as a cofactor.

The enzyme catalyses ssDNA + n NTP = ssDNA/pppN(pN)n-1 hybrid + (n-1) diphosphate.. RNA polymerase that catalyzes the synthesis of short RNA molecules used as primers for DNA polymerase during DNA replication. Also part of the exosome, which is a complex involved in RNA degradation. Acts as a poly(A)-binding protein that enhances the interaction between heteromeric, adenine-rich transcripts and the exosome. The protein is DNA primase DnaG of Methanocella arvoryzae (strain DSM 22066 / NBRC 105507 / MRE50).